A 293-amino-acid chain; its full sequence is DNA repair protein RecO (293 aa).

This sequence belongs to the RecO family.

Functionally, involved in DNA repair and RecF pathway recombination. This is DNA repair protein RecO from Cyanothece sp. (strain PCC 7425 / ATCC 29141).